A 616-amino-acid chain; its full sequence is Protein LNK1 (616 aa).

4 disordered regions span residues 72–112, 361–398, 410–434, and 567–616; these read GKNP…HGFN, ESKS…GPTV, ANLL…KTDS, and SSLS…SDNN. A compositionally biased stretch (polar residues) spans 371–395; sequence KPSPSSASNESYTSNHAQSIESLQG. Residues 567-577 are compositionally biased toward low complexity; the sequence is SSLSSDNNVLS. Over residues 594–608 the composition is skewed to basic and acidic residues; the sequence is RIEKQEETTELRPEA.

Interacts with CCA1, LHY, REV4 and REV8, but not with PRR7 or PRR9. As to expression, expressed in roots, stems, leaves, seedlings, cotyledons, inflorescences and siliques. Highest expression in root tips, young leaves and vasculatur tissues.

The protein localises to the nucleus. Functionally, transcriptional coactivator necessary for expression of the clock genes PRR5 and TOC1. Antagonizes REV8 function in the regulation of anthocyanin accumulation. Involved in red light input to the clock. Activates clock-controlled genes with afternoon peak. Mediates light inhibition of hypocotyl elongation. This Arabidopsis thaliana (Mouse-ear cress) protein is Protein LNK1.